We begin with the raw amino-acid sequence, 141 residues long: S-adenosylmethionine decarboxylase proenzyme (141 aa).

Serine 63 serves as the catalytic Schiff-base intermediate with substrate; via pyruvic acid. At serine 63 the chain carries Pyruvic acid (Ser); by autocatalysis. Histidine 68 serves as the catalytic Proton acceptor; for processing activity. Catalysis depends on cysteine 83, which acts as the Proton donor; for catalytic activity.

Belongs to the prokaryotic AdoMetDC family. Type 1 subfamily. Heterotetramer of two alpha and two beta chains arranged as a dimer of alpha/beta heterodimers. It depends on pyruvate as a cofactor. Post-translationally, is synthesized initially as an inactive proenzyme. Formation of the active enzyme involves a self-maturation process in which the active site pyruvoyl group is generated from an internal serine residue via an autocatalytic post-translational modification. Two non-identical subunits are generated from the proenzyme in this reaction, and the pyruvate is formed at the N-terminus of the alpha chain, which is derived from the carboxyl end of the proenzyme. The post-translation cleavage follows an unusual pathway, termed non-hydrolytic serinolysis, in which the side chain hydroxyl group of the serine supplies its oxygen atom to form the C-terminus of the beta chain, while the remainder of the serine residue undergoes an oxidative deamination to produce ammonia and the pyruvoyl group blocking the N-terminus of the alpha chain.

It catalyses the reaction S-adenosyl-L-methionine + H(+) = S-adenosyl 3-(methylsulfanyl)propylamine + CO2. It functions in the pathway amine and polyamine biosynthesis; S-adenosylmethioninamine biosynthesis; S-adenosylmethioninamine from S-adenosyl-L-methionine: step 1/1. Catalyzes the decarboxylation of S-adenosylmethionine to S-adenosylmethioninamine (dcAdoMet), the propylamine donor required for the synthesis of the polyamines spermine and spermidine from the diamine putrescine. The protein is S-adenosylmethionine decarboxylase proenzyme of Thermococcus onnurineus (strain NA1).